Here is a 227-residue protein sequence, read N- to C-terminus: N-acetyltransferase 8 (227 aa).

Residues 1–42 (MAPCHIRKYQESDRQWVVGLLSRGMAEHAPATFRQLLKLPRT) lie on the Cytoplasmic side of the membrane. Residues 43–63 (LILLLGGPLALLLVSGSWLLA) traverse the membrane as a helical; Signal-anchor for type II membrane protein segment. Positions 61–220 (LLALVFSISL…HTVHFIYHLP (160 aa)) constitute an N-acetyltransferase domain. Topologically, residues 64-227 (LVFSISLFPA…HLPSSKVGSL (164 aa)) are lumenal.

Belongs to the NAT8 family. In terms of tissue distribution, preferentially expressed in liver and kidney. Also detected in brain (at protein level).

Its subcellular location is the endoplasmic reticulum-Golgi intermediate compartment membrane. It localises to the endoplasmic reticulum membrane. It catalyses the reaction L-lysyl-[protein] + acetyl-CoA = N(6)-acetyl-L-lysyl-[protein] + CoA + H(+). The catalysed reaction is an S-substituted L-cysteine + acetyl-CoA = an N-acetyl-L-cysteine-S-conjugate + CoA + H(+). It functions in the pathway sulfur metabolism; glutathione metabolism. In terms of biological role, endoplasmic reticulum (ER)-membrane-bound lysine N-acetyltransferase catalyzing the N6-acetylation of lysine residues in the lumen of the ER in various proteins, including PROM1 and BACE1, using acetyl-CoA as acetyl donor. Thereby, may regulate apoptosis through the acetylation and the regulation of the expression of PROM1. May also regulate amyloid beta-peptide secretion through acetylation of BACE1 and the regulation of its expression in neurons. N(6)-lysine acetylation in the ER maintains protein homeostasis and regulates reticulophagy. Alternatively, acetylates the free alpha-amino group of cysteine S-conjugates to form mercapturic acids. This is the final step in a major route for detoxification of a wide variety of reactive electrophiles which starts with their incorporation into glutathione S-conjugates. The glutathione S-conjugates are then further processed into cysteine S-conjugates and finally mercapturic acids which are water soluble and can be readily excreted in urine or bile. The chain is N-acetyltransferase 8 from Homo sapiens (Human).